The chain runs to 185 residues: Translation initiation factor IF-3 (185 aa).

It belongs to the IF-3 family. Monomer.

It is found in the cytoplasm. Functionally, IF-3 binds to the 30S ribosomal subunit and shifts the equilibrium between 70S ribosomes and their 50S and 30S subunits in favor of the free subunits, thus enhancing the availability of 30S subunits on which protein synthesis initiation begins. In Streptococcus pneumoniae (strain Hungary19A-6), this protein is Translation initiation factor IF-3.